A 150-amino-acid polypeptide reads, in one-letter code: Transcriptional repressor NrdR (150 aa).

Residues 3–34 (CPFCNFEESKVVDSRATDDNTTIRRRRECLNC) fold into a zinc finger. The ATP-cone domain maps to 49–139 (VLVVKKDLTR…VYRQFKDINT (91 aa)).

Belongs to the NrdR family. Requires Zn(2+) as cofactor.

Functionally, negatively regulates transcription of bacterial ribonucleotide reductase nrd genes and operons by binding to NrdR-boxes. This chain is Transcriptional repressor NrdR, found in Clostridium botulinum (strain Alaska E43 / Type E3).